Consider the following 284-residue polypeptide: Homeobox protein SMOX-5 (284 aa).

Positions 37–96 (RRKTRTTFSNCQLNELENNFNRQRYLTPTDRDRIAKHLGLTNTQVITWFQNRRAKLKREA) form a DNA-binding region, homeobox. Residues 117–172 (LSLSDHDHEETQIDDENEQGDNNNDDDGDDNDVEEDDGEEQEKNHTKYLTQPPSIS) are disordered. Residues 128 to 156 (QIDDENEQGDNNNDDDGDDNDVEEDDGEE) show a composition bias toward acidic residues.

It localises to the nucleus. In Schistosoma mansoni (Blood fluke), this protein is Homeobox protein SMOX-5 (SMOX-5).